We begin with the raw amino-acid sequence, 147 residues long: MKLILKENIEHLGQIGDIVKVAPGYARNYLLPKGLAIEATEKNAKALEHAKRQLAYKKNKSLEAAKNLVAKLEALSIVLTHQAGEEGKLFGSVTNMEIAAFLKDNGLEIDRKKIVLAEPIKQLGEYSVPVKVHPEVGATLKVTVSAA.

It belongs to the bacterial ribosomal protein bL9 family.

Binds to the 23S rRNA. This is Large ribosomal subunit protein bL9 from Trichlorobacter lovleyi (strain ATCC BAA-1151 / DSM 17278 / SZ) (Geobacter lovleyi).